We begin with the raw amino-acid sequence, 130 residues long: S-adenosylmethionine decarboxylase proenzyme (130 aa).

S64 (schiff-base intermediate with substrate; via pyruvic acid) is an active-site residue. S64 bears the Pyruvic acid (Ser); by autocatalysis mark. H69 functions as the Proton acceptor; for processing activity in the catalytic mechanism. C84 serves as the catalytic Proton donor; for catalytic activity.

It belongs to the prokaryotic AdoMetDC family. Type 1 subfamily. In terms of assembly, heterotetramer of two alpha and two beta chains arranged as a dimer of alpha/beta heterodimers. Pyruvate is required as a cofactor. Post-translationally, is synthesized initially as an inactive proenzyme. Formation of the active enzyme involves a self-maturation process in which the active site pyruvoyl group is generated from an internal serine residue via an autocatalytic post-translational modification. Two non-identical subunits are generated from the proenzyme in this reaction, and the pyruvate is formed at the N-terminus of the alpha chain, which is derived from the carboxyl end of the proenzyme. The post-translation cleavage follows an unusual pathway, termed non-hydrolytic serinolysis, in which the side chain hydroxyl group of the serine supplies its oxygen atom to form the C-terminus of the beta chain, while the remainder of the serine residue undergoes an oxidative deamination to produce ammonia and the pyruvoyl group blocking the N-terminus of the alpha chain.

It catalyses the reaction S-adenosyl-L-methionine + H(+) = S-adenosyl 3-(methylsulfanyl)propylamine + CO2. It functions in the pathway amine and polyamine biosynthesis; S-adenosylmethioninamine biosynthesis; S-adenosylmethioninamine from S-adenosyl-L-methionine: step 1/1. In terms of biological role, catalyzes the decarboxylation of S-adenosylmethionine to S-adenosylmethioninamine (dcAdoMet), the propylamine donor required for the synthesis of the polyamines spermine and spermidine from the diamine putrescine. This Thermoplasma volcanium (strain ATCC 51530 / DSM 4299 / JCM 9571 / NBRC 15438 / GSS1) protein is S-adenosylmethionine decarboxylase proenzyme.